The chain runs to 449 residues: Phosphoglucosamine mutase (449 aa).

Ser100 functions as the Phosphoserine intermediate in the catalytic mechanism. The Mg(2+) site is built by Ser100, Asp241, Asp243, and Asp245. At Ser100 the chain carries Phosphoserine.

The protein belongs to the phosphohexose mutase family. It depends on Mg(2+) as a cofactor. Post-translationally, activated by phosphorylation.

The enzyme catalyses alpha-D-glucosamine 1-phosphate = D-glucosamine 6-phosphate. Catalyzes the conversion of glucosamine-6-phosphate to glucosamine-1-phosphate. The protein is Phosphoglucosamine mutase of Clostridium botulinum (strain Kyoto / Type A2).